The primary structure comprises 779 residues: Acyl-homoserine lactone acylase PvdQ (779 aa).

An N-terminal signal peptide occupies residues 1 to 25 (MIISRPLCGFVFAGLSFAVILPAQA). Residues 202-223 (SQQVQALQLAAVRNQRFALERG) constitute a propeptide, spacer peptide. S224 (nucleophile) is an active-site residue. Residues 731 to 746 (ESSNPQSAHSSDQTEA) show a composition bias toward polar residues. The disordered stretch occupies residues 731–752 (ESSNPQSAHSSDQTEAFSKKQW).

This sequence belongs to the peptidase S45 family. In terms of assembly, heterodimer of an alpha subunit and a beta subunit processed from the same precursor.

The protein resides in the periplasm. The enzyme catalyses an N-acyl-L-homoserine lactone + H2O = L-homoserine lactone + a carboxylate. Its function is as follows. Catalyzes the deacylation of acyl-homoserine lactone (AHL or acyl-HSL), releasing homoserine lactone (HSL) and the corresponding fatty acid. Possesses a specificity for the degradation of long-chain acyl-HSLs (side chains of 11 to 14 carbons in length). The protein is Acyl-homoserine lactone acylase PvdQ (pvdQ) of Pseudomonas savastanoi pv. phaseolicola (strain 1448A / Race 6) (Pseudomonas syringae pv. phaseolicola (strain 1448A / Race 6)).